The chain runs to 137 residues: Protein LTO1 homolog (137 aa).

At Ala2 the chain carries N-acetylalanine. Residues 22–58 (GYQEGYEEGSSLGIVEGKRYGMVHGAKIGSEIGCYRG) form a deca-GX3 motif; required for interaction with YAE1 and the CIA complex region.

It belongs to the LTO1 family. In terms of assembly, forms a complex with YAE1. Interacts with PYCR1 and PYCR2.

The protein resides in the nucleus. Functionally, the complex LTO1:YAE1 functions as a target specific adapter that probably recruits apo-ABCE1 to the cytosolic iron-sulfur protein assembly (CIA) complex machinery. May be required for biogenesis of the large ribosomal subunit and initiation of translation. May play a role in the regulation of proline metabolism and ROS production. In Mus musculus (Mouse), this protein is Protein LTO1 homolog.